Here is a 271-residue protein sequence, read N- to C-terminus: Troponin T, fast skeletal muscle (271 aa).

Residues methionine 1–glutamate 21 are compositionally biased toward acidic residues. The interval methionine 1–lysine 74 is disordered. Residue serine 2 is modified to N-acetylserine. Residue serine 2 is modified to Phosphoserine. Composition is skewed to basic and acidic residues over residues glutamate 29–arginine 53 and proline 62–lysine 74. At serine 90 the chain carries Phosphoserine. Basic and acidic residues predominate over residues arginine 113 to lysine 155. The interval arginine 113 to leucine 192 is disordered. Phosphoserine is present on residues serine 161, serine 168, and serine 169. The span at threonine 183–leucine 192 shows a compositional bias: basic and acidic residues. Serine 205 bears the Phosphoserine mark. Tyrosine 221 bears the Phosphotyrosine mark. Positions aspartate 249–lysine 271 are disordered.

Belongs to the troponin T family.

Functionally, troponin T is the tropomyosin-binding subunit of troponin, the thin filament regulatory complex which confers calcium-sensitivity to striated muscle actomyosin ATPase activity. This Sus scrofa (Pig) protein is Troponin T, fast skeletal muscle (TNNT3).